A 63-amino-acid polypeptide reads, in one-letter code: Translational regulator CsrA (63 aa).

Belongs to the CsrA/RsmA family. As to quaternary structure, homodimer; the beta-strands of each monomer intercalate to form a hydrophobic core, while the alpha-helices form wings that extend away from the core.

It is found in the cytoplasm. A key translational regulator that binds mRNA to regulate translation initiation and/or mRNA stability. Mediates global changes in gene expression, shifting from rapid growth to stress survival by linking envelope stress, the stringent response and the catabolite repression systems. Usually binds in the 5'-UTR; binding at or near the Shine-Dalgarno sequence prevents ribosome-binding, repressing translation, binding elsewhere in the 5'-UTR can activate translation and/or stabilize the mRNA. Its function is antagonized by small RNA(s). The polypeptide is Translational regulator CsrA (Haemophilus influenzae (strain 86-028NP)).